The sequence spans 311 residues: MIKKEIIILCGPTASGKSYLGHELAKAYGCEIINIDSMQVYREIPIITASPIQIYNTGIHYHLYNFLSITEDFSVIKYLKLASEKIREITARGKIPILIGGTGLYINLLVFGYNNIPDISQDVRVQVRNLHNEIGNIELWNKLEKLDPIAATKINHCDTQRLIRAYEVLMHTGKSIFSFHTAQKERILSDFNFKIIFLNPERKFLYKTCDERLDKIFKDKAIDEIALIKKQFTPKEYANLKAVGIKEIIAYLDGNLTLNDALNVAQMRTRQYAKRQVTWFTHQIQDKTILEYSTQEEFEQILRNLLFTLKS.

An ATP-binding site is contributed by 11-18; sequence GPTASGKS. 13 to 18 contacts substrate; sequence TASGKS. 2 interaction with substrate tRNA regions span residues 36 to 39 and 160 to 164; these read DSMQ and QRLIR.

The protein belongs to the IPP transferase family. Monomer. Requires Mg(2+) as cofactor.

The enzyme catalyses adenosine(37) in tRNA + dimethylallyl diphosphate = N(6)-dimethylallyladenosine(37) in tRNA + diphosphate. In terms of biological role, catalyzes the transfer of a dimethylallyl group onto the adenine at position 37 in tRNAs that read codons beginning with uridine, leading to the formation of N6-(dimethylallyl)adenosine (i(6)A). The polypeptide is tRNA dimethylallyltransferase (Rickettsia typhi (strain ATCC VR-144 / Wilmington)).